The chain runs to 762 residues: N,N-dimethylformamidase beta subunit (762 aa).

Heterotetramer of two DmfA1 (alpha) and two DmfA2 (beta) subunits.

The catalysed reaction is N,N-dimethylformamide + H2O = dimethylamine + formate. Hydrolyzes N,N-dimethylformamide, and to a lesser extent N,N-dimethylacetamide and N,N-diethylacetamide. Has no activity against the substituted amides N-methylformamide, N-ethylformamide, N-ethylformamide and N-methylacetamide or the unsubstituted amides formamide, nicotinamide, acetoamide, benzamide, acetamide and acrylamide. This Paracoccus aminophilus protein is N,N-dimethylformamidase beta subunit.